The sequence spans 488 residues: Proline--tRNA ligase (488 aa).

The protein belongs to the class-II aminoacyl-tRNA synthetase family. ProS type 3 subfamily. Homodimer.

It localises to the cytoplasm. The enzyme catalyses tRNA(Pro) + L-proline + ATP = L-prolyl-tRNA(Pro) + AMP + diphosphate. Its function is as follows. Catalyzes the attachment of proline to tRNA(Pro) in a two-step reaction: proline is first activated by ATP to form Pro-AMP and then transferred to the acceptor end of tRNA(Pro). The sequence is that of Proline--tRNA ligase from Borrelia garinii subsp. bavariensis (strain ATCC BAA-2496 / DSM 23469 / PBi) (Borreliella bavariensis).